A 132-amino-acid chain; its full sequence is Small ribosomal subunit protein uS9 (132 aa).

The protein belongs to the universal ribosomal protein uS9 family.

This Leptospira interrogans serogroup Icterohaemorrhagiae serovar copenhageni (strain Fiocruz L1-130) protein is Small ribosomal subunit protein uS9.